Here is a 239-residue protein sequence, read N- to C-terminus: Purine nucleoside phosphorylase DeoD-type 1 (239 aa).

His5 contributes to the a purine D-ribonucleoside binding site. Phosphate is bound by residues Gly21, Arg25, Arg44, and 88-91 (RVGS). A purine D-ribonucleoside contacts are provided by residues 180–182 (EME) and 204–205 (SD). Asp205 (proton donor) is an active-site residue.

The protein belongs to the PNP/UDP phosphorylase family. In terms of assembly, homohexamer; trimer of homodimers.

The enzyme catalyses a purine D-ribonucleoside + phosphate = a purine nucleobase + alpha-D-ribose 1-phosphate. The catalysed reaction is a purine 2'-deoxy-D-ribonucleoside + phosphate = a purine nucleobase + 2-deoxy-alpha-D-ribose 1-phosphate. Functionally, catalyzes the reversible phosphorolytic breakdown of the N-glycosidic bond in the beta-(deoxy)ribonucleoside molecules, with the formation of the corresponding free purine bases and pentose-1-phosphate. This Vibrio parahaemolyticus serotype O3:K6 (strain RIMD 2210633) protein is Purine nucleoside phosphorylase DeoD-type 1.